The chain runs to 523 residues: Calcium-dependent protein kinase 34 (523 aa).

A disordered region spans residues 1 to 60; that stretch reads MGNCCSHGRDSDDNKEEPRPENGGGGVGAAEASVRASKHPPASPPPATKQGPIGPVLGRP. Glycine 2 carries the N-myristoyl glycine lipid modification. Residues 7–20 show a composition bias toward basic and acidic residues; that stretch reads HGRDSDDNKEEPRP. A Protein kinase domain is found at 68 to 326; that stretch reads YTLGKELGRG…AAQVLNHPWI (259 aa). ATP contacts are provided by residues 74 to 82 and lysine 97; that span reads LGRGQFGVT. Aspartate 192 (proton acceptor) is an active-site residue. Position 232 is a phosphoserine (serine 232). Residues 332 to 362 form an autoinhibitory domain region; sequence APDVPLDNAVMSRLKQFKAMNNFKKVALRVI. EF-hand domains are found at residues 369-404, 405-440, 441-476, and 480-511; these read EEIM…QGTR, LSEY…INRL, DREE…FGMN, and DIKE…GNPD. The Ca(2+) site is built by aspartate 382, aspartate 384, serine 386, threonine 388, glutamate 393, aspartate 418, aspartate 420, asparagine 422, threonine 424, glutamate 429, aspartate 454, aspartate 456, serine 458, tyrosine 460, glutamate 465, aspartate 489, aspartate 491, aspartate 493, arginine 495, and glutamate 500.

Belongs to the protein kinase superfamily. Ser/Thr protein kinase family. CDPK subfamily.

It localises to the membrane. The catalysed reaction is L-seryl-[protein] + ATP = O-phospho-L-seryl-[protein] + ADP + H(+). The enzyme catalyses L-threonyl-[protein] + ATP = O-phospho-L-threonyl-[protein] + ADP + H(+). Its activity is regulated as follows. Activated by calcium. Autophosphorylation may play an important role in the regulation of the kinase activity. In terms of biological role, may play a role in signal transduction pathways that involve calcium as a second messenger. The sequence is that of Calcium-dependent protein kinase 34 (CPK34) from Arabidopsis thaliana (Mouse-ear cress).